The primary structure comprises 336 residues: Ferrochelatase (336 aa).

Fe cation-binding residues include histidine 206 and glutamate 287.

Belongs to the ferrochelatase family.

It is found in the cytoplasm. The catalysed reaction is heme b + 2 H(+) = protoporphyrin IX + Fe(2+). Its pathway is porphyrin-containing compound metabolism; protoheme biosynthesis; protoheme from protoporphyrin-IX: step 1/1. Catalyzes the ferrous insertion into protoporphyrin IX. The sequence is that of Ferrochelatase from Neisseria meningitidis serogroup B (strain ATCC BAA-335 / MC58).